The primary structure comprises 119 residues: SGSCEFKTCWKAMPPFRKVGNVLKEKFDGATEVEQSEIGSTKVLVPKNSQFKPHTDEDLVYLDSSPDFCDHDLKNGVLGTSGRQCNKTSKAIDGCELMCCGRGFHTDEVEVVERCSCKF.

A lipid anchor (O-palmitoleoyl serine; by PORCN) is attached at S1. 2 disulfide bridges follow: C69–C100 and C85–C95. N-linked (GlcNAc...) asparagine glycosylation occurs at N86.

Belongs to the Wnt family. Palmitoleoylation is required for efficient binding to frizzled receptors. Depalmitoleoylation leads to Wnt signaling pathway inhibition.

The protein localises to the secreted. It localises to the extracellular space. It is found in the extracellular matrix. Ligand for members of the frizzled family of seven transmembrane receptors. Plays an important role in embryonic development. The polypeptide is Protein Wnt-4 (WNT4) (Meleagris gallopavo (Wild turkey)).